Reading from the N-terminus, the 467-residue chain is Fumarate hydratase class II (467 aa).

Residues 98-100, Arg-126, 129-132, 139-141, and Thr-187 each bind substrate; these read SGT, HPND, and SSN. His-188 serves as the catalytic Proton donor/acceptor. Ser-318 is a catalytic residue. Residues Ser-319 and 324–326 contribute to the substrate site; that span reads KVN.

Belongs to the class-II fumarase/aspartase family. Fumarase subfamily. As to quaternary structure, homotetramer.

It is found in the cytoplasm. It carries out the reaction (S)-malate = fumarate + H2O. It participates in carbohydrate metabolism; tricarboxylic acid cycle; (S)-malate from fumarate: step 1/1. In terms of biological role, involved in the TCA cycle. Catalyzes the stereospecific interconversion of fumarate to L-malate. This is Fumarate hydratase class II from Escherichia coli O157:H7.